The sequence spans 386 residues: Galactokinase (386 aa).

Residue glutamate 35–aspartate 38 coordinates substrate. ATP is bound by residues serine 69 and glycine 125–serine 131. Positions 131 and 163 each coordinate Mg(2+). Catalysis depends on aspartate 175, which acts as the Proton acceptor. Tyrosine 224 is a binding site for substrate.

This sequence belongs to the GHMP kinase family. GalK subfamily.

It is found in the cytoplasm. It catalyses the reaction alpha-D-galactose + ATP = alpha-D-galactose 1-phosphate + ADP + H(+). Its pathway is carbohydrate metabolism; galactose metabolism. Functionally, catalyzes the transfer of the gamma-phosphate of ATP to D-galactose to form alpha-D-galactose-1-phosphate (Gal-1-P). This Vibrio vulnificus (strain YJ016) protein is Galactokinase.